Consider the following 515-residue polypeptide: Dimethylnonatriene synthase (515 aa).

A helical transmembrane segment spans residues 3–23 (FLFSTLQLSLFSLALVIFGYI). His-219 is a substrate binding site. Lys-252 participates in a covalent cross-link: Glycyl lysine isopeptide (Lys-Gly) (interchain with G-Cter in ubiquitin). Cys-452 contacts heme.

Belongs to the cytochrome P450 family. Heme is required as a cofactor. As to expression, expressed in stems, flower peduncles, receptacle of developing and mature flowers and in stigma of mature opening flower buds.

The protein resides in the membrane. It catalyses the reaction (3S,6E)-nerolidol + reduced [NADPH--hemoprotein reductase] + O2 = (3E)-4,8-dimethylnona-1,3,7-triene + but-3-en-2-one + oxidized [NADPH--hemoprotein reductase] + 2 H2O + H(+). The catalysed reaction is (6E,10E)-geranyllinalool + reduced [NADPH--hemoprotein reductase] + O2 = (3E,7E)-4,8,12-trimethyltrideca 1,3,7,11-tetraene + but-3-en-2-one + oxidized [NADPH--hemoprotein reductase] + 2 H2O + H(+). Its pathway is secondary metabolite biosynthesis; terpenoid biosynthesis. Functionally, involved in the biosynthesis of homoterpenes, attractants of herbivores parasitoids and predators (e.g. predatory mites and parasitoid wasps). Catalyzes the conversion of the C20 (E,E)-geranyllinalool to C16-homoterpene 4,8,12-trimethyltrideca-1,3,7,11-tetraene (TMTT) of the C15 (E)-nerolidol to C11-homoterpene (E)-4,8-dimethyl-1,3,7-nonatriene (DMNT); these volatile compounds are produced upon insect herbivore attack and emitted from flowers and vegetative tissues during herbivore feeding. Required during resistance responses to the fungus Alternaria brassicae. Prevents oviposition of the phloem-feeding insect cabbage whitefly (Aleyrodes proletella). This chain is Dimethylnonatriene synthase, found in Arabidopsis thaliana (Mouse-ear cress).